Reading from the N-terminus, the 485-residue chain is Pre-glycoprotein polyprotein GP complex (485 aa).

Glycine 2 carries the N-myristoyl glycine; by host lipid modification. The Extracellular portion of the chain corresponds to glycine 2–glutamate 17. A helical transmembrane segment spans residues alanine 18–lysine 33. At glycine 34–serine 58 the chain is on the cytoplasmic side. A Zn(2+)-binding site is contributed by cysteine 57. Residues valine 59–aspartate 424 lie on the Extracellular side of the membrane. 4 cysteine pairs are disulfide-bonded: cysteine 85–cysteine 225, cysteine 271–cysteine 284, cysteine 293–cysteine 302, and cysteine 356–cysteine 377. N-linked (GlcNAc...) asparagine; by host glycans are attached at residues asparagine 88, asparagine 128, asparagine 179, and asparagine 218. 4 N-linked (GlcNAc...) asparagine; by host glycosylation sites follow: asparagine 357, asparagine 365, asparagine 382, and asparagine 387. A helical transmembrane segment spans residues valine 425–proline 445. Over threonine 446–asparagine 485 the chain is Cytoplasmic. Zn(2+) is bound by residues histidine 447, histidine 449, cysteine 455, histidine 459, cysteine 467, and cysteine 469.

This sequence belongs to the arenaviridae GPC protein family. Interacts with glycoprotein G2. Part of the GP complex (GP-C) together with glycoprotein G1 and glycoprotein G2. The GP-complex interacts with protein Z, which interacts with ribonucleocapsid; these interactions may induce virion budding. In terms of assembly, homotrimer; disulfide-linked. In pre-fusion state, G1 homotrimers bind G2 homotrimers via ionic interactions. Part of the GP complex (GP-C) together with glycoprotein G2 and the stable signal peptide. The GP-complex interacts with protein Z, which interacts with ribonucleocapsid; these interactions may induce virion budding. As to quaternary structure, homotrimer. Interacts with the stable signal peptide. In pre-fusion state, G2 homotrimers bind G1 homotrimers via ionic interactions. Part of the GP complex (GP-C) together with glycoprotein G1 and the stable signal peptide. Acidification in the endosome triggers rearrangements, which ultimately leads to a 6 helix bundle formed by the two heptad repeat domains (HR1 and HR2) in post-fusion state. The GP-complex interacts with protein Z, which interacts with ribonucleocapsid; these interactions may induce virion budding. Specific enzymatic cleavages in vivo yield mature proteins. GP-C polyprotein is cleaved in the endoplasmic reticulum by the host protease MBTPS1. Only cleaved glycoprotein is incorporated into virions. Post-translationally, the SSP remains stably associated with the GP complex following cleavage by signal peptidase and plays crucial roles in the trafficking of GP through the secretory pathway. In terms of processing, myristoylation is necessary for GP2-mediated fusion activity.

The protein localises to the virion membrane. Its subcellular location is the host endoplasmic reticulum membrane. It localises to the host Golgi apparatus membrane. The protein resides in the host cell membrane. Functions as a cleaved signal peptide that is retained as the third component of the GP complex (GP-C). Helps to stabilize the spike complex in its native conformation. The SSP is required for efficient glycoprotein expression, post-translational maturation cleavage of G1 and G2, glycoprotein transport to the cell surface plasma membrane, formation of infectious virus particles, and acid pH-dependent glycoprotein-mediated cell fusion. Its function is as follows. Forms the virion spikes together with glycoprotein G2. The glycoprotein spike trimers are connected to the underlying matrix. Interacts with the host receptor leading to virus endocytosis. In terms of biological role, forms the virion spikes together with glycoprotein G1. The glycoprotein spike trimers are connected to the underlying matrix. Class I viral fusion protein that directs fusion of viral and host endosomal membranes, leading to delivery of the nucleocapsid into the cytoplasm. Membrane fusion is mediated by irreversible conformational changes induced by acidification. This is Pre-glycoprotein polyprotein GP complex from Sigmodon hispidus (Hispid cotton rat).